A 672-amino-acid chain; its full sequence is Nuclear hormone receptor family member nhr-5 (672 aa).

The span at 1-19 (MSSGGNSSNVNRNSGSSNV) shows a compositional bias: low complexity. The tract at residues 1-38 (MSSGGNSSNVNRNSGSSNVITLNDSDEETEDSNLGSSS) is disordered. A DNA-binding region (nuclear receptor) is located at residues 40-115 (TNLCKVCGAE…EGMNPAYVRP (76 aa)). 2 NR C4-type zinc fingers span residues 43 to 63 (CKVC…CVGC) and 79 to 98 (CAAN…CRSC). The NR LBD domain maps to 155-424 (EMRTILMTLL…PLLTDLFGCF (270 aa)). Residues 550–577 (NIQGPSHLPQCGSTVTQRPTVPSSTTSS) are disordered. Over residues 562-577 (STVTQRPTVPSSTTSS) the composition is skewed to low complexity.

It belongs to the nuclear hormone receptor family.

The protein resides in the nucleus. Orphan nuclear receptor. The protein is Nuclear hormone receptor family member nhr-5 (nhr-5) of Caenorhabditis elegans.